A 444-amino-acid chain; its full sequence is RAC family serine/threonine-protein kinase homolog (444 aa).

One can recognise a PH domain in the interval 5–100 (PIKHEGFLTK…WIEILINERE (96 aa)). The Protein kinase domain occupies 120-374 (FELLNLVGKG…PNLIKRHPFF (255 aa)). Residues 126-134 (VGKGSFGKV) and Lys149 each bind ATP. Asp243 serves as the catalytic Proton acceptor. At Thr278 the chain carries Phosphothreonine. One can recognise an AGC-kinase C-terminal domain in the interval 375 to 444 (RSIDWEQLFQ…TYVAESEHLR (70 aa)).

The protein belongs to the protein kinase superfamily. AGC Ser/Thr protein kinase family. RAC subfamily.

It carries out the reaction L-seryl-[protein] + ATP = O-phospho-L-seryl-[protein] + ADP + H(+). The enzyme catalyses L-threonyl-[protein] + ATP = O-phospho-L-threonyl-[protein] + ADP + H(+). Predominantly involved during the aggregation to control cell polarity and chemotaxis. Phosphorylates talB, gefN, gefS, PI4P 5-kinase and gacQ. In Dictyostelium discoideum (Social amoeba), this protein is RAC family serine/threonine-protein kinase homolog (pkbA).